The chain runs to 102 residues: Small ribosomal subunit protein uS10m (102 aa).

Belongs to the universal ribosomal protein uS10 family.

The protein resides in the mitochondrion. This Marchantia polymorpha (Common liverwort) protein is Small ribosomal subunit protein uS10m (RPS10).